A 125-amino-acid chain; its full sequence is Multifunctional methyltransferase subunit TRM112-like protein (125 aa).

One can recognise a TRM112 domain in the interval 2-119; sequence RLLTHNLLSS…SRGIPNMLLS (118 aa). S119 is subject to Phosphoserine.

It belongs to the TRM112 family. Part of the heterodimeric BUD23-TRM112 methyltransferase complex; this heterodimerization is necessary for the metabolic stability and activity of the catalytic subunit BUD23. Part of the heterodimeric N6AMT1-TRM112 methyltransferase complex; this heterodimerization is necessary for S-adenosyl-L-methionine-binding to N6AMT1/HEMK2. Part of the heterodimeric ALKBH8-TRM112 methyltransferase complex. Part of the heterodimeric METTL5-TRM112 methyltransferase complex; this heterodimerization is necessary for the stability of the catalytic subunit METTL5. Part of the heterodimeric THUMPD3-TRM112 methyltransferase complex; this complex forms an active tRNA methyltransferase, where TRMT112 acts as an activator of the catalytic subunit THUMPD3. Part of the heterodimeric THUMPD2-TRM112 methyltransferase complex; this complex forms an active tRNA methyltransferase, where TRMT112 acts as an activator of the catalytic subunit THUMPD2. Part of the heterodimeric TRMT11-TRM112 methyltransferase complex; this complex forms an active tRNA methyltransferase, where TRMT112 acts as an activator of the catalytic subunit TRMT11.

The protein localises to the nucleus. Its subcellular location is the nucleoplasm. It localises to the cytoplasm. It is found in the perinuclear region. Acts as an activator of both rRNA/tRNA and protein methyltransferases. Together with methyltransferase BUD23, methylates the N(7) position of a guanine in 18S rRNA. The heterodimer with HEMK2/N6AMT1 catalyzes N5-methylation of ETF1 on 'Gln-185', using S-adenosyl L-methionine as methyl donor. The heterodimer with ALKBH8 catalyzes the methylation of 5-carboxymethyl uridine to 5-methylcarboxymethyl uridine at the wobble position of the anticodon loop in target tRNA species. Together with methyltransferase THUMPD3, catalyzes the formation of N(2)-methylguanosine at position 6 in a broad range of tRNA substrates and at position 7 of tRNA(Trp). Involved in the pre-rRNA processing steps leading to small-subunit rRNA production. Together with methyltransferase METTL5, specifically methylates the 6th position of adenine in position 1832 of 18S rRNA. This Bos taurus (Bovine) protein is Multifunctional methyltransferase subunit TRM112-like protein (TRMT112).